A 588-amino-acid polypeptide reads, in one-letter code: Glutamyl-tRNA(Gln) amidotransferase subunit B, mitochondrial (588 aa).

Residues 1–109 constitute a mitochondrion transit peptide; sequence MLRSWIGSGT…RAPTSTSETP (109 aa). The span at 22-35 shows a compositional bias: low complexity; that stretch reads SSLPSPKASFSSAP. The segment at 22 to 50 is disordered; the sequence is SSLPSPKASFSSAPNRYLQPPTSADRVPL.

This sequence belongs to the GatB/GatE family. GatB subfamily. Subunit of the heterotrimeric GatCAB amidotransferase (AdT) complex, composed of A, B and C subunits.

It localises to the mitochondrion. The enzyme catalyses L-glutamyl-tRNA(Gln) + L-glutamine + ATP + H2O = L-glutaminyl-tRNA(Gln) + L-glutamate + ADP + phosphate + H(+). Allows the formation of correctly charged Gln-tRNA(Gln) through the transamidation of misacylated Glu-tRNA(Gln) in the mitochondria. The reaction takes place in the presence of glutamine and ATP through an activated gamma-phospho-Glu-tRNA(Gln). This chain is Glutamyl-tRNA(Gln) amidotransferase subunit B, mitochondrial, found in Penicillium rubens (strain ATCC 28089 / DSM 1075 / NRRL 1951 / Wisconsin 54-1255) (Penicillium chrysogenum).